A 170-amino-acid chain; its full sequence is Adenine phosphoribosyltransferase (170 aa).

It belongs to the purine/pyrimidine phosphoribosyltransferase family. In terms of assembly, homodimer.

The protein localises to the cytoplasm. The enzyme catalyses AMP + diphosphate = 5-phospho-alpha-D-ribose 1-diphosphate + adenine. It functions in the pathway purine metabolism; AMP biosynthesis via salvage pathway; AMP from adenine: step 1/1. Catalyzes a salvage reaction resulting in the formation of AMP, that is energically less costly than de novo synthesis. The chain is Adenine phosphoribosyltransferase from Geobacillus thermodenitrificans (strain NG80-2).